The primary structure comprises 424 residues: Histidinol dehydrogenase (424 aa).

Residues Y124, Q186, and N209 each coordinate NAD(+). S232, Q254, and H257 together coordinate substrate. Positions 254 and 257 each coordinate Zn(2+). Active-site proton acceptor residues include E322 and H323. Positions 323, 356, 410, and 415 each coordinate substrate. D356 is a binding site for Zn(2+). Residue H415 coordinates Zn(2+).

Belongs to the histidinol dehydrogenase family. The cofactor is Zn(2+).

It carries out the reaction L-histidinol + 2 NAD(+) + H2O = L-histidine + 2 NADH + 3 H(+). Its pathway is amino-acid biosynthesis; L-histidine biosynthesis; L-histidine from 5-phospho-alpha-D-ribose 1-diphosphate: step 9/9. Catalyzes the sequential NAD-dependent oxidations of L-histidinol to L-histidinaldehyde and then to L-histidine. The chain is Histidinol dehydrogenase from Moorella thermoacetica (strain ATCC 39073 / JCM 9320).